We begin with the raw amino-acid sequence, 104 residues long: Small ribosomal subunit protein uS10 (104 aa).

Belongs to the universal ribosomal protein uS10 family. In terms of assembly, part of the 30S ribosomal subunit.

Its function is as follows. Involved in the binding of tRNA to the ribosomes. This Aliarcobacter butzleri (strain RM4018) (Arcobacter butzleri) protein is Small ribosomal subunit protein uS10.